Consider the following 120-residue polypeptide: MGKRKSRAKPAPTKRMDKLDTIFSCPFCNHGSSVECIIDMKHLIGKAACRICEESFSTTITALTEAIDIYSEWIDECERVNTAEDDVVQEEEEEVEEEEEEEEEEDDEDDHVSVKRKYNF.

Residues Cys-25, Cys-28, Cys-49, and Cys-52 each coordinate Zn(2+). The segment covering 84–110 (EDDVVQEEEEEVEEEEEEEEEEDDEDD) has biased composition (acidic residues). The segment at 84–120 (EDDVVQEEEEEVEEEEEEEEEEDDEDDHVSVKRKYNF) is disordered.

It belongs to the ELOF1 family.

The protein localises to the nucleus. Its function is as follows. Transcription elongation factor implicated in the maintenance of proper chromatin structure in actively transcribed regions. The protein is Transcription elongation factor 1 homolog of Arabidopsis thaliana (Mouse-ear cress).